A 172-amino-acid polypeptide reads, in one-letter code: Large ribosomal subunit protein uL10 (172 aa).

This sequence belongs to the universal ribosomal protein uL10 family. In terms of assembly, part of the ribosomal stalk of the 50S ribosomal subunit. The N-terminus interacts with L11 and the large rRNA to form the base of the stalk. The C-terminus forms an elongated spine to which L12 dimers bind in a sequential fashion forming a multimeric L10(L12)X complex.

Functionally, forms part of the ribosomal stalk, playing a central role in the interaction of the ribosome with GTP-bound translation factors. This Rhodopseudomonas palustris (strain TIE-1) protein is Large ribosomal subunit protein uL10.